A 408-amino-acid polypeptide reads, in one-letter code: DNA primase DnaG (408 aa).

One can recognise a Toprim domain in the interval 165 to 243 (PELIIVEGRA…KIDYVARAPT (79 aa)). Mg(2+)-binding residues include Glu-171, Asp-216, and Asp-218.

The protein belongs to the archaeal DnaG primase family. As to quaternary structure, forms a ternary complex with MCM helicase and DNA. Component of the archaeal exosome complex. Requires Mg(2+) as cofactor.

The enzyme catalyses ssDNA + n NTP = ssDNA/pppN(pN)n-1 hybrid + (n-1) diphosphate.. RNA polymerase that catalyzes the synthesis of short RNA molecules used as primers for DNA polymerase during DNA replication. Also part of the exosome, which is a complex involved in RNA degradation. Acts as a poly(A)-binding protein that enhances the interaction between heteromeric, adenine-rich transcripts and the exosome. This Sulfurisphaera tokodaii (strain DSM 16993 / JCM 10545 / NBRC 100140 / 7) (Sulfolobus tokodaii) protein is DNA primase DnaG.